The sequence spans 261 residues: Carnitinyl-CoA dehydratase (261 aa).

Glu111 acts as the Nucleophile in catalysis. Residue Glu131 is the Proton acceptor of the active site.

This sequence belongs to the enoyl-CoA hydratase/isomerase family.

It carries out the reaction (R)-carnitinyl-CoA = crotonobetainyl-CoA + H2O. Its pathway is amine and polyamine metabolism; carnitine metabolism. Its function is as follows. Catalyzes the reversible dehydration of L-carnitinyl-CoA to crotonobetainyl-CoA. This is Carnitinyl-CoA dehydratase from Escherichia coli O157:H7.